The sequence spans 317 residues: Small ribosomal subunit protein uS2 (317 aa).

2 disordered regions span residues Met1–Glu30 and Arg293–Glu317. Residues Met18 to Glu30 are compositionally biased toward basic and acidic residues. Residues Lys308–Glu317 are compositionally biased toward low complexity.

This sequence belongs to the universal ribosomal protein uS2 family.

The sequence is that of Small ribosomal subunit protein uS2 from Mycoplasmopsis agalactiae (strain NCTC 10123 / CIP 59.7 / PG2) (Mycoplasma agalactiae).